The primary structure comprises 110 residues: Large ribosomal subunit protein uL22 (110 aa).

It belongs to the universal ribosomal protein uL22 family. In terms of assembly, part of the 50S ribosomal subunit.

This protein binds specifically to 23S rRNA; its binding is stimulated by other ribosomal proteins, e.g. L4, L17, and L20. It is important during the early stages of 50S assembly. It makes multiple contacts with different domains of the 23S rRNA in the assembled 50S subunit and ribosome. Functionally, the globular domain of the protein is located near the polypeptide exit tunnel on the outside of the subunit, while an extended beta-hairpin is found that lines the wall of the exit tunnel in the center of the 70S ribosome. The polypeptide is Large ribosomal subunit protein uL22 (Exiguobacterium sibiricum (strain DSM 17290 / CCUG 55495 / CIP 109462 / JCM 13490 / 255-15)).